Here is a 117-residue protein sequence, read N- to C-terminus: Large ribosomal subunit protein bL19 (117 aa).

This sequence belongs to the bacterial ribosomal protein bL19 family.

Functionally, this protein is located at the 30S-50S ribosomal subunit interface and may play a role in the structure and function of the aminoacyl-tRNA binding site. The protein is Large ribosomal subunit protein bL19 of Cutibacterium acnes (strain DSM 16379 / KPA171202) (Propionibacterium acnes).